Here is a 259-residue protein sequence, read N- to C-terminus: Expansin-B6 (259 aa).

The N-terminal stretch at 1 to 24 (MASSSHRYFALLALFAVSLKFCYC) is a signal peptide. A glycan (N-linked (GlcNAc...) asparagine) is linked at N26. One can recognise an Expansin-like EG45 domain in the interval 52–160 (GGACGFAVAN…IRVECLYRRT (109 aa)). Intrachain disulfides connect C55-C82, C85-C155, and C90-C96. Residues 173-254 (YYISFVVEYE…NWKPNETYRS (82 aa)) enclose the Expansin-like CBD domain. The N-linked (GlcNAc...) asparagine glycan is linked to N249.

The protein belongs to the expansin family. Expansin B subfamily.

The protein localises to the secreted. It localises to the cell wall. It is found in the membrane. Its function is as follows. May cause loosening and extension of plant cell walls by disrupting non-covalent bonding between cellulose microfibrils and matrix glucans. In Arabidopsis thaliana (Mouse-ear cress), this protein is Expansin-B6.